The following is a 270-amino-acid chain: Shikimate dehydrogenase (NADP(+)) (270 aa).

Residues 15-17 and Thr-62 each bind shikimate; that span reads SKS. The Proton acceptor role is filled by Lys-66. Shikimate-binding residues include Asn-87 and Asp-102. NADP(+) is bound by residues 127–131, 151–156, and Met-214; these read GAGGA and NRTVAR. Residue Tyr-216 coordinates shikimate. Gly-238 contributes to the NADP(+) binding site.

This sequence belongs to the shikimate dehydrogenase family. In terms of assembly, homodimer.

It catalyses the reaction shikimate + NADP(+) = 3-dehydroshikimate + NADPH + H(+). Its pathway is metabolic intermediate biosynthesis; chorismate biosynthesis; chorismate from D-erythrose 4-phosphate and phosphoenolpyruvate: step 4/7. Involved in the biosynthesis of the chorismate, which leads to the biosynthesis of aromatic amino acids. Catalyzes the reversible NADPH linked reduction of 3-dehydroshikimate (DHSA) to yield shikimate (SA). This Alkalilimnicola ehrlichii (strain ATCC BAA-1101 / DSM 17681 / MLHE-1) protein is Shikimate dehydrogenase (NADP(+)).